The following is a 178-amino-acid chain: Large ribosomal subunit protein uL6 (178 aa).

This sequence belongs to the universal ribosomal protein uL6 family. As to quaternary structure, part of the 50S ribosomal subunit.

In terms of biological role, this protein binds to the 23S rRNA, and is important in its secondary structure. It is located near the subunit interface in the base of the L7/L12 stalk, and near the tRNA binding site of the peptidyltransferase center. This is Large ribosomal subunit protein uL6 from Streptococcus suis (strain 05ZYH33).